The following is a 378-amino-acid chain: Anhydro-N-acetylmuramic acid kinase (378 aa).

23–30 lines the ATP pocket; it reads GTSMDGAD.

It belongs to the anhydro-N-acetylmuramic acid kinase family.

It catalyses the reaction 1,6-anhydro-N-acetyl-beta-muramate + ATP + H2O = N-acetyl-D-muramate 6-phosphate + ADP + H(+). It participates in amino-sugar metabolism; 1,6-anhydro-N-acetylmuramate degradation. The protein operates within cell wall biogenesis; peptidoglycan recycling. In terms of biological role, catalyzes the specific phosphorylation of 1,6-anhydro-N-acetylmuramic acid (anhMurNAc) with the simultaneous cleavage of the 1,6-anhydro ring, generating MurNAc-6-P. Is required for the utilization of anhMurNAc either imported from the medium or derived from its own cell wall murein, and thus plays a role in cell wall recycling. This chain is Anhydro-N-acetylmuramic acid kinase, found in Bordetella pertussis (strain Tohama I / ATCC BAA-589 / NCTC 13251).